Here is a 684-residue protein sequence, read N- to C-terminus: Glycine--tRNA ligase beta subunit (684 aa).

Belongs to the class-II aminoacyl-tRNA synthetase family. Tetramer of two alpha and two beta subunits.

It is found in the cytoplasm. It catalyses the reaction tRNA(Gly) + glycine + ATP = glycyl-tRNA(Gly) + AMP + diphosphate. This chain is Glycine--tRNA ligase beta subunit, found in Pseudomonas syringae pv. syringae (strain B728a).